The chain runs to 185 residues: Photosystem I assembly protein Ycf4 (185 aa).

The next 2 membrane-spanning stretches (helical) occupy residues 21–43 (NFFWACILFLGSLGFLAVGASSY) and 63–85 (GVVMSFYGIAGLFISSYLWCTIL).

This sequence belongs to the Ycf4 family.

The protein resides in the plastid. Its subcellular location is the chloroplast thylakoid membrane. In terms of biological role, seems to be required for the assembly of the photosystem I complex. The chain is Photosystem I assembly protein Ycf4 from Saccharum hybrid (Sugarcane).